Consider the following 628-residue polypeptide: Biosynthetic arginine decarboxylase (628 aa).

An N6-(pyridoxal phosphate)lysine modification is found at Lys-101. Residue 281–291 (VDVGGGLGVDY) coordinates substrate.

It belongs to the Orn/Lys/Arg decarboxylase class-II family. SpeA subfamily. It depends on Mg(2+) as a cofactor. The cofactor is pyridoxal 5'-phosphate.

The catalysed reaction is L-arginine + H(+) = agmatine + CO2. The protein operates within amine and polyamine biosynthesis; agmatine biosynthesis; agmatine from L-arginine: step 1/1. Catalyzes the biosynthesis of agmatine from arginine. The polypeptide is Biosynthetic arginine decarboxylase (Alkalilimnicola ehrlichii (strain ATCC BAA-1101 / DSM 17681 / MLHE-1)).